Here is a 166-residue protein sequence, read N- to C-terminus: T-cell surface glycoprotein CD3 zeta chain (166 aa).

The N-terminal stretch at 1-21 (MKWTALVIVAVLQTQFPVTAA) is a signal peptide. Residues 22-30 (QSFGLLDPK) are Extracellular-facing. The helical transmembrane segment at 31 to 51 (LCYLLDGILFIYGVIVTALFL) threads the bilayer. The Cytoplasmic portion of the chain corresponds to 52-166 (RAKFSRSADA…ALHMQALPPR (115 aa)). Serine 58 carries the post-translational modification Phosphoserine. ITAM domains lie at 61-89 (APAY…LDRR), 100-128 (PQRK…EIGM), and 133-161 (QRRR…LHMQ). A phosphotyrosine mark is found at tyrosine 64, tyrosine 72, tyrosine 83, tyrosine 111, tyrosine 123, tyrosine 144, and tyrosine 155. Residues 126–156 (IGMKSDNQRRRGKGHDGVYQGLSTATKDTYD) form a disordered region.

The protein belongs to the CD3Z/FCER1G family. As to quaternary structure, the TCR-CD3 complex is composed of a CD3D/CD3E and a CD3G/CD3E heterodimers that preferentially associate with TCRalpha and TCRbeta, respectively, to form TCRalpha/CD3E/CD3G and TCRbeta/CD3G/CD3E trimers. In turn, the hexamer interacts with CD3Z homodimer to form the TCR-CD3 complex. Alternatively, TCRalpha and TCRbeta can be replaced by TCRgamma and TCRdelta. Interacts with SLA. Interacts with TRAT1. Interacts with DOCK2. Interacts with SLA2. Interacts with SHB. Interacts with ZAP70. Interacts (tyrosine phosphorylated) with SHC1 (via SH2 domain). Interacts with PTPRC. Interacts with CRK; this interaction regulates CD3Z phosphorylation. Interacts (on T cell side) with CD81, ICAM1 and CD9 at immunological synapses between antigen-presenting cells and T cells. Interacts with CD160. Interacts with LY6E. Interacts with LY6E. The signaling subunit of immunoglobulin gamma (IgG) Fc receptor complex. As a homodimer or a heterodimer with FCER1G, associates with the ligand binding subunit FCGR3A (via transmembrane domain); this interaction is a prerequisite for Fc receptor complex expression on the cell surface. Interacts with CD5. Post-translationally, phosphorylated on Tyr residues after T-cell receptor triggering by LCK in association with CD4/CD8.

Its subcellular location is the cell membrane. Its function is as follows. Part of the TCR-CD3 complex present on T-lymphocyte cell surface that plays an essential role in adaptive immune response. When antigen presenting cells (APCs) activate T-cell receptor (TCR), TCR-mediated signals are transmitted across the cell membrane by the CD3 chains CD3D, CD3E, CD3G and CD3Z. All CD3 chains contain immunoreceptor tyrosine-based activation motifs (ITAMs) in their cytoplasmic domain. Upon TCR engagement, these motifs become phosphorylated by Src family protein tyrosine kinases LCK and FYN, resulting in the activation of downstream signaling pathways. CD3Z ITAMs phosphorylation creates multiple docking sites for the protein kinase ZAP70 leading to ZAP70 phosphorylation and its conversion into a catalytically active enzyme. Plays an important role in intrathymic T-cell differentiation. Additionally, participates in the activity-dependent synapse formation of retinal ganglion cells (RGCs) in both the retina and dorsal lateral geniculate nucleus (dLGN). The chain is T-cell surface glycoprotein CD3 zeta chain (CD247) from Ovis aries (Sheep).